The sequence spans 930 residues: Isoleucine--tRNA ligase (930 aa).

A 'HIGH' region motif is present at residues 57-67; it reads PYANGHLHIGH. E573 provides a ligand contact to L-isoleucyl-5'-AMP. The short motif at 614-618 is the 'KMSKS' region element; sequence KMSKS. K617 lines the ATP pocket. Zn(2+) contacts are provided by C902, C905, C918, and C921.

It belongs to the class-I aminoacyl-tRNA synthetase family. IleS type 1 subfamily. In terms of assembly, monomer. Zn(2+) serves as cofactor.

The protein localises to the cytoplasm. The enzyme catalyses tRNA(Ile) + L-isoleucine + ATP = L-isoleucyl-tRNA(Ile) + AMP + diphosphate. Its function is as follows. Catalyzes the attachment of isoleucine to tRNA(Ile). As IleRS can inadvertently accommodate and process structurally similar amino acids such as valine, to avoid such errors it has two additional distinct tRNA(Ile)-dependent editing activities. One activity is designated as 'pretransfer' editing and involves the hydrolysis of activated Val-AMP. The other activity is designated 'posttransfer' editing and involves deacylation of mischarged Val-tRNA(Ile). This is Isoleucine--tRNA ligase from Helicobacter hepaticus (strain ATCC 51449 / 3B1).